A 360-amino-acid chain; its full sequence is D-alanine--D-alanine ligase (360 aa).

An ATP-grasp domain is found at Lys-139–Ser-344. An ATP-binding site is contributed by Glu-172–Glu-227. Residues Asp-298, Glu-311, and Asn-313 each coordinate Mg(2+).

Belongs to the D-alanine--D-alanine ligase family. Mg(2+) serves as cofactor. It depends on Mn(2+) as a cofactor.

The protein localises to the cytoplasm. The enzyme catalyses 2 D-alanine + ATP = D-alanyl-D-alanine + ADP + phosphate + H(+). It functions in the pathway cell wall biogenesis; peptidoglycan biosynthesis. In terms of biological role, cell wall formation. The polypeptide is D-alanine--D-alanine ligase (Bacillus pumilus (strain SAFR-032)).